The sequence spans 384 residues: 8-amino-7-oxononanoate synthase (384 aa).

Arg-21 lines the substrate pocket. Residue Gly-108–Phe-109 participates in pyridoxal 5'-phosphate binding. Residue His-133 participates in substrate binding. Pyridoxal 5'-phosphate-binding residues include Ser-179, His-207, and Thr-233. Lys-236 is modified (N6-(pyridoxal phosphate)lysine). Thr-350 provides a ligand contact to substrate.

This sequence belongs to the class-II pyridoxal-phosphate-dependent aminotransferase family. BioF subfamily. In terms of assembly, homodimer. Pyridoxal 5'-phosphate is required as a cofactor.

The catalysed reaction is 6-carboxyhexanoyl-[ACP] + L-alanine + H(+) = (8S)-8-amino-7-oxononanoate + holo-[ACP] + CO2. It participates in cofactor biosynthesis; biotin biosynthesis. Catalyzes the decarboxylative condensation of pimeloyl-[acyl-carrier protein] and L-alanine to produce 8-amino-7-oxononanoate (AON), [acyl-carrier protein], and carbon dioxide. In Erwinia tasmaniensis (strain DSM 17950 / CFBP 7177 / CIP 109463 / NCPPB 4357 / Et1/99), this protein is 8-amino-7-oxononanoate synthase.